Consider the following 495-residue polypeptide: Cytochrome P450 monooxygenase 113 (495 aa).

A helical membrane pass occupies residues 2-22; sequence FLQIAACFTVIGLLYGLVSNL. C428 provides a ligand contact to heme.

The protein belongs to the cytochrome P450 family. Heme serves as cofactor.

The protein localises to the membrane. Its pathway is secondary metabolite biosynthesis. In terms of biological role, cytochrome P450 monooxygenase that is able to use 4-ethoxybenzoic acid as a substrate for oxidation. This Postia placenta (strain ATCC 44394 / Madison 698-R) (Brown rot fungus) protein is Cytochrome P450 monooxygenase 113.